The following is a 51-amino-acid chain: Large ribosomal subunit protein eL39z/eL39x (51 aa).

The disordered stretch occupies residues 1–21 (MPSHKSFMIKKKLGKKMRQNR). Positions 7 to 19 (FMIKKKLGKKMRQ) are enriched in basic residues.

The protein belongs to the eukaryotic ribosomal protein eL39 family.

The chain is Large ribosomal subunit protein eL39z/eL39x (RPL39A) from Arabidopsis thaliana (Mouse-ear cress).